The following is a 299-amino-acid chain: ATP phosphoribosyltransferase (299 aa).

It belongs to the ATP phosphoribosyltransferase family. Long subfamily. As to quaternary structure, equilibrium between an active dimeric form, an inactive hexameric form and higher aggregates. Interconversion between the various forms is largely reversible and is influenced by the natural substrates and inhibitors of the enzyme. The cofactor is Mg(2+).

Its subcellular location is the cytoplasm. It carries out the reaction 1-(5-phospho-beta-D-ribosyl)-ATP + diphosphate = 5-phospho-alpha-D-ribose 1-diphosphate + ATP. Its pathway is amino-acid biosynthesis; L-histidine biosynthesis; L-histidine from 5-phospho-alpha-D-ribose 1-diphosphate: step 1/9. Feedback inhibited by histidine. Its function is as follows. Catalyzes the condensation of ATP and 5-phosphoribose 1-diphosphate to form N'-(5'-phosphoribosyl)-ATP (PR-ATP). Has a crucial role in the pathway because the rate of histidine biosynthesis seems to be controlled primarily by regulation of HisG enzymatic activity. The polypeptide is ATP phosphoribosyltransferase (Enterobacter sp. (strain 638)).